A 617-amino-acid polypeptide reads, in one-letter code: Dihydroxy-acid dehydratase (617 aa).

Aspartate 81 serves as a coordination point for Mg(2+). Cysteine 122 is a binding site for [2Fe-2S] cluster. Residues aspartate 123 and lysine 124 each coordinate Mg(2+). N6-carboxylysine is present on lysine 124. Cysteine 195 lines the [2Fe-2S] cluster pocket. Glutamate 492 contacts Mg(2+). Serine 518 acts as the Proton acceptor in catalysis.

Belongs to the IlvD/Edd family. As to quaternary structure, homodimer. [2Fe-2S] cluster serves as cofactor. It depends on Mg(2+) as a cofactor.

The catalysed reaction is (2R)-2,3-dihydroxy-3-methylbutanoate = 3-methyl-2-oxobutanoate + H2O. It catalyses the reaction (2R,3R)-2,3-dihydroxy-3-methylpentanoate = (S)-3-methyl-2-oxopentanoate + H2O. The protein operates within amino-acid biosynthesis; L-isoleucine biosynthesis; L-isoleucine from 2-oxobutanoate: step 3/4. It participates in amino-acid biosynthesis; L-valine biosynthesis; L-valine from pyruvate: step 3/4. In terms of biological role, functions in the biosynthesis of branched-chain amino acids. Catalyzes the dehydration of (2R,3R)-2,3-dihydroxy-3-methylpentanoate (2,3-dihydroxy-3-methylvalerate) into 2-oxo-3-methylpentanoate (2-oxo-3-methylvalerate) and of (2R)-2,3-dihydroxy-3-methylbutanoate (2,3-dihydroxyisovalerate) into 2-oxo-3-methylbutanoate (2-oxoisovalerate), the penultimate precursor to L-isoleucine and L-valine, respectively. The polypeptide is Dihydroxy-acid dehydratase (Azorhizobium caulinodans (strain ATCC 43989 / DSM 5975 / JCM 20966 / LMG 6465 / NBRC 14845 / NCIMB 13405 / ORS 571)).